Consider the following 187-residue polypeptide: NADH-quinone oxidoreductase subunit B (187 aa).

Positions 1 to 10 (MTADHNRALH) are enriched in basic and acidic residues. A disordered region spans residues 1–22 (MTADHNRALHDAPTARGGEVRQ). 4 residues coordinate [4Fe-4S] cluster: cysteine 66, cysteine 67, cysteine 131, and cysteine 161.

This sequence belongs to the complex I 20 kDa subunit family. NDH-1 is composed of 14 different subunits. Subunits NuoB, C, D, E, F, and G constitute the peripheral sector of the complex. It depends on [4Fe-4S] cluster as a cofactor.

The protein resides in the cell inner membrane. It catalyses the reaction a quinone + NADH + 5 H(+)(in) = a quinol + NAD(+) + 4 H(+)(out). Functionally, NDH-1 shuttles electrons from NADH, via FMN and iron-sulfur (Fe-S) centers, to quinones in the respiratory chain. Couples the redox reaction to proton translocation (for every two electrons transferred, four hydrogen ions are translocated across the cytoplasmic membrane), and thus conserves the redox energy in a proton gradient. The protein is NADH-quinone oxidoreductase subunit B of Erythrobacter litoralis (strain HTCC2594).